The following is a 292-amino-acid chain: NAD kinase (292 aa).

The active-site Proton acceptor is the Asp72. NAD(+) contacts are provided by residues 72 to 73 (DG), 146 to 147 (NE), His157, Arg174, Asp176, and 187 to 192 (TAYSLS).

The protein belongs to the NAD kinase family. A divalent metal cation serves as cofactor.

It is found in the cytoplasm. It catalyses the reaction NAD(+) + ATP = ADP + NADP(+) + H(+). Involved in the regulation of the intracellular balance of NAD and NADP, and is a key enzyme in the biosynthesis of NADP. Catalyzes specifically the phosphorylation on 2'-hydroxyl of the adenosine moiety of NAD to yield NADP. This Shewanella loihica (strain ATCC BAA-1088 / PV-4) protein is NAD kinase.